The following is a 128-amino-acid chain: Aspartate 1-decarboxylase (128 aa).

Ser-25 functions as the Schiff-base intermediate with substrate; via pyruvic acid in the catalytic mechanism. Ser-25 carries the pyruvic acid (Ser) modification. A substrate-binding site is contributed by Thr-57. Tyr-58 (proton donor) is an active-site residue. Position 73–75 (73–75 (GSA)) interacts with substrate.

This sequence belongs to the PanD family. In terms of assembly, heterooctamer of four alpha and four beta subunits. The cofactor is pyruvate. Post-translationally, is synthesized initially as an inactive proenzyme, which is activated by self-cleavage at a specific serine bond to produce a beta-subunit with a hydroxyl group at its C-terminus and an alpha-subunit with a pyruvoyl group at its N-terminus.

The protein resides in the cytoplasm. It carries out the reaction L-aspartate + H(+) = beta-alanine + CO2. Its pathway is cofactor biosynthesis; (R)-pantothenate biosynthesis; beta-alanine from L-aspartate: step 1/1. Functionally, catalyzes the pyruvoyl-dependent decarboxylation of aspartate to produce beta-alanine. This is Aspartate 1-decarboxylase from Burkholderia mallei (strain NCTC 10247).